A 435-amino-acid chain; its full sequence is Manganese transport system membrane protein MntC (435 aa).

9 helical membrane passes run 17 to 37 (VLAG…FVLL), 42 to 62 (LIGD…FLFT), 68 to 88 (PFFL…IQLI), 98 to 118 (SAIG…LTYI), 143 to 163 (QDII…IVFF), 166 to 186 (FTLI…VRFL), 189 to 209 (LLAC…GVIL), 228 to 248 (LTGM…AGTL), and 255 to 275 (GMAT…FSMI).

The protein belongs to the ABC-3 integral membrane protein family. In terms of assembly, the complex is probably composed of two ATP-binding proteins (MntB), two transmembrane proteins (MntC and MntD) and a solute-binding protein (MntA).

It is found in the cell membrane. In terms of biological role, probably part of the ABC transporter complex MntABCD involved in manganese import. Probably responsible for the translocation of the substrate across the membrane. The chain is Manganese transport system membrane protein MntC from Bacillus subtilis (strain 168).